The primary structure comprises 367 residues: tRNA/tmRNA (uracil-C(5))-methyltransferase (367 aa).

The S-adenosyl-L-methionine site is built by Gln-190, Tyr-218, Asn-223, Glu-239, and Asp-299. The active-site Nucleophile is Cys-324. Glu-358 functions as the Proton acceptor in the catalytic mechanism.

This sequence belongs to the class I-like SAM-binding methyltransferase superfamily. RNA M5U methyltransferase family. TrmA subfamily.

It catalyses the reaction uridine(54) in tRNA + S-adenosyl-L-methionine = 5-methyluridine(54) in tRNA + S-adenosyl-L-homocysteine + H(+). The enzyme catalyses uridine(341) in tmRNA + S-adenosyl-L-methionine = 5-methyluridine(341) in tmRNA + S-adenosyl-L-homocysteine + H(+). In terms of biological role, dual-specificity methyltransferase that catalyzes the formation of 5-methyluridine at position 54 (m5U54) in all tRNAs, and that of position 341 (m5U341) in tmRNA (transfer-mRNA). This is tRNA/tmRNA (uracil-C(5))-methyltransferase from Serratia proteamaculans (strain 568).